Here is a 472-residue protein sequence, read N- to C-terminus: Mitochondrial substrate carrier family protein C (472 aa).

Topologically, residues 1–189 (MVLNENDKEF…ASSLRNTITY (189 aa)) are mitochondrial intermembrane. EF-hand domains lie at 6-41 (NDKE…LRIP), 42-70 (SSEK…FEDF), 73-108 (ENIK…LNIP), and 110-145 (YSEQ…LPNS). Asp19, Asp21, Asn23, Lys25, Glu30, Asp55, Asp57, Asp59, Ser61, Glu66, Asp86, Asn88, Ser90, Thr92, Glu97, Asp123, Asn125, Asp127, Gln129, and Glu134 together coordinate Ca(2+). 3 Solcar repeats span residues 184-268 (RNTI…VKKL), 276-362 (LTSA…LKHK), and 375-461 (GQLL…FKKA). A helical membrane pass occupies residues 190 to 207 (MLAGSVAGFASRTSTAPL). Residues 208–242 (ERVKIMCQLNHGKPISLISAFKACYKDGGIKGFFR) lie on the Mitochondrial matrix side of the membrane. Residues 243 to 263 (GNLANIIKVSPESAVKFGTYE) traverse the membrane as a helical segment. Residues 264-281 (YVKKLFAENDCELTSAQR) lie on the Mitochondrial intermembrane side of the membrane. Residues 282–302 (FISGSVAGVVSHTTLFPLEVV) traverse the membrane as a helical segment. The Mitochondrial matrix portion of the chain corresponds to 303-330 (RLRLSAEIAGTYNGIFDCFKKIAISEKS). The helical transmembrane segment at 331–351 (IRPFYRGLGASITATIPHSGV) threads the bilayer. The Mitochondrial intermembrane portion of the chain corresponds to 352–377 (NMMVYEFLKHKVIKMTGNEFPTAGQL). A helical membrane pass occupies residues 378–398 (LVCASTSSVCGQLVGYPFHVV). Topologically, residues 399–441 (KSRLITQGSSVNQEKYTGLFDGLTKIIKKEGPIGLYKGIVPSF) are mitochondrial matrix. A helical transmembrane segment spans residues 442–462 (MKSIPSHSITFIVYEGFKKAF). Residues 463 to 472 (DVNLKEKKHH) are Mitochondrial intermembrane-facing.

It belongs to the mitochondrial carrier (TC 2.A.29) family.

It is found in the mitochondrion inner membrane. Functionally, calcium-dependent mitochondrial solute carrier. Mitochondrial solute carriers shuttle metabolites, nucleotides, and cofactors through the mitochondrial inner membrane. The protein is Mitochondrial substrate carrier family protein C (mcfC) of Dictyostelium discoideum (Social amoeba).